A 218-amino-acid chain; its full sequence is Peroxynitrite isomerase 2 (218 aa).

Residues 1-24 form a disordered region; sequence MTPAGDTPERGSGDRAVAEAAERA. A compositionally biased stretch (basic and acidic residues) spans 7–24; sequence TPERGSGDRAVAEAAERA. The GXWXGXG signature appears at 65–71; sequence GVWRGEG. Residues lysine 181 and histidine 208 each coordinate heme b.

This sequence belongs to the nitrobindin family. Homodimer. It depends on heme b as a cofactor.

It catalyses the reaction peroxynitrite = nitrate. It functions in the pathway nitrogen metabolism. Functionally, heme-binding protein able to scavenge peroxynitrite and to protect free L-tyrosine against peroxynitrite-mediated nitration, by acting as a peroxynitrite isomerase that converts peroxynitrite to nitrate. Therefore, this protein likely plays a role in peroxynitrite sensing and in the detoxification of reactive nitrogen and oxygen species (RNS and ROS, respectively). Is able to bind nitric oxide (NO) in vitro, but may act as a sensor of peroxynitrite levels in vivo. The chain is Peroxynitrite isomerase 2 from Mycolicibacterium smegmatis (strain ATCC 700084 / mc(2)155) (Mycobacterium smegmatis).